The sequence spans 185 residues: 3-hexulose-6-phosphate isomerase (185 aa).

The SIS domain maps to 29 to 172; the sequence is LADHILSSHQ…ILKLMEKKGL (144 aa). Substrate contacts are provided by residues S47 and 86-91; that span reads SGSGET. E152 functions as the Proton acceptor in the catalytic mechanism.

It belongs to the SIS family. PHI subfamily. As to quaternary structure, homotetramer.

The catalysed reaction is D-arabino-hex-3-ulose 6-phosphate = beta-D-fructose 6-phosphate. The protein operates within one-carbon metabolism; formaldehyde assimilation via RuMP pathway; D-fructose 6-phosphate from D-ribulose 5-phosphate and formaldehyde: step 2/2. Functionally, catalyzes the isomerization between 3-hexulose 6-phosphate and fructose 6-phosphate. Together with HxlA, may act as a formaldehyde detoxification system. The protein is 3-hexulose-6-phosphate isomerase (hxlB) of Bacillus subtilis (strain 168).